The following is a 279-amino-acid chain: MSRKIVEFRNVSFRYDEEGPWVLKNCSFEIYEDEWLAIIGHNGSGKSTIAKLLNGLLFPQEGEIYIDGIKVDENSIWDIRKEVGMVFQNPDNQFVGATVQDDVAFGMENRGIPREIMKKRIDETLQAVRMQDYLLTEPHRLSGGQKQRVAIASVLAISPKILILDEATAMLDPVGRKEIMQTVNSIQDSQGLSLITITHDLKEITRADRVIVLNNGERWDEATPSQLFKRKDALREIGLDVPFVAHLSDAFRNNGITIEHSPLSHEQLLEELWTYHSKM.

In terms of domain architecture, ABC transporter spans 6–240 (VEFRNVSFRY…KDALREIGLD (235 aa)). 40–47 (GHNGSGKS) contacts ATP.

This sequence belongs to the ABC transporter superfamily. Energy-coupling factor EcfA family. As to quaternary structure, forms a stable energy-coupling factor (ECF) transporter complex composed of 2 membrane-embedded substrate-binding proteins (S component), 2 ATP-binding proteins (A component) and 2 transmembrane proteins (T component).

The protein resides in the cell membrane. In terms of biological role, ATP-binding (A) component of a common energy-coupling factor (ECF) ABC-transporter complex. Unlike classic ABC transporters this ECF transporter provides the energy necessary to transport a number of different substrates. The polypeptide is Energy-coupling factor transporter ATP-binding protein EcfA1 (Oceanobacillus iheyensis (strain DSM 14371 / CIP 107618 / JCM 11309 / KCTC 3954 / HTE831)).